The primary structure comprises 285 residues: MLSVVAIPKICVTGPARRCFFHTAKKLYADDYKPAAMSSNAPSLTKDQAKKRELKRLVQRKAEAKRPATASPLYMPVTKALRYLRAAEVGRPQSQQTINLTTLVVGERGTAPLSGSVTFPKPLRYIKIAAFTNDESKLEELREKYPNHLIGGADLVAKIKSGEISVDFDKAFATPDIVPALQSQVARILGPRGVLPSVKKGTVSDDISSLLQESLGSMPFRQRGNSISIGVGKCYFTDREILQNIISARAAFKTAVDNQKSKKPNILSKTTLSSTHGPGIVIDFA.

A mitochondrion-targeting transit peptide spans 1-19; the sequence is MLSVVAIPKICVTGPARRC.

Belongs to the universal ribosomal protein uL1 family. As to quaternary structure, component of the mitochondrial large ribosomal subunit (mt-LSU). Mature yeast 74S mitochondrial ribosomes consist of a small (37S) and a large (54S) subunit. The 37S small subunit contains a 15S ribosomal RNA (15S mt-rRNA) and 34 different proteins. The 54S large subunit contains a 21S rRNA (21S mt-rRNA) and 46 different proteins.

The protein resides in the mitochondrion. In terms of biological role, component of the mitochondrial ribosome (mitoribosome), a dedicated translation machinery responsible for the synthesis of mitochondrial genome-encoded proteins, including at least some of the essential transmembrane subunits of the mitochondrial respiratory chain. The mitoribosomes are attached to the mitochondrial inner membrane and translation products are cotranslationally integrated into the membrane. The polypeptide is Large ribosomal subunit protein uL1m (MRPL1) (Saccharomyces cerevisiae (strain ATCC 204508 / S288c) (Baker's yeast)).